Here is a 305-residue protein sequence, read N- to C-terminus: tRNA pseudouridine synthase B (305 aa).

The active-site Nucleophile is Asp39. Residues Leu237 to Lys305 form the PUA domain.

The protein belongs to the pseudouridine synthase TruB family. Type 1 subfamily.

It carries out the reaction uridine(55) in tRNA = pseudouridine(55) in tRNA. In terms of biological role, responsible for synthesis of pseudouridine from uracil-55 in the psi GC loop of transfer RNAs. The chain is tRNA pseudouridine synthase B from Moorella thermoacetica (strain ATCC 39073 / JCM 9320).